The primary structure comprises 361 residues: 3-dehydroquinate synthase (361 aa).

This sequence belongs to the archaeal-type DHQ synthase family.

It carries out the reaction 2-amino-2,3,7-trideoxy-D-lyxo-hept-6-ulosonate + NAD(+) + H2O = 3-dehydroquinate + NH4(+) + NADH + H(+). Catalyzes the oxidative deamination and cyclization of 2-amino-3,7-dideoxy-D-threo-hept-6-ulosonic acid (ADH) to yield 3-dehydroquinate (DHQ), which is fed into the canonical shikimic pathway of aromatic amino acid biosynthesis. In Methanococcus vannielii (strain ATCC 35089 / DSM 1224 / JCM 13029 / OCM 148 / SB), this protein is 3-dehydroquinate synthase.